The sequence spans 405 residues: uncharacterized protein (405 aa).

12 consecutive transmembrane segments (helical) span residues 19–39 (IVSI…PLAV), 48–68 (MGFS…ATLL), 85–105 (IVVF…LADI), 129–149 (SFAG…LHIG), 156–176 (GIVT…CYAW), 178–198 (GLQG…LLAL), 224–244 (GMAL…ITLF), 252–272 (GAAF…LLFP), 283–303 (VAMI…TAAM), 309–329 (IGVL…GVVA), 344–364 (TYTV…GLVM), and 366–386 (WAGV…ALLL).

It belongs to the major facilitator superfamily. YhhS family.

It is found in the cell inner membrane. This is an uncharacterized protein from Salmonella typhi.